Consider the following 413-residue polypeptide: Peptidase T (413 aa).

His81 provides a ligand contact to Zn(2+). Residue Asp83 is part of the active site. Residue Asp143 coordinates Zn(2+). Residue Glu178 is the Proton acceptor of the active site. Positions 179, 201, and 383 each coordinate Zn(2+).

It belongs to the peptidase M20B family. The cofactor is Zn(2+).

The protein localises to the cytoplasm. The enzyme catalyses Release of the N-terminal residue from a tripeptide.. In terms of biological role, cleaves the N-terminal amino acid of tripeptides. The protein is Peptidase T of Lactococcus lactis subsp. cremoris (Streptococcus cremoris).